Consider the following 728-residue polypeptide: Glutamate--cysteine ligase (728 aa).

The tract at residues 517 to 552 is disordered; the sequence is PVRTTRRGGSASRSASGTSTPNSGSSRPATPPLGPV. Residues 523 to 536 are compositionally biased toward low complexity; the sequence is RGGSASRSASGTST.

It belongs to the glutamate--cysteine ligase type 3 family.

It carries out the reaction L-cysteine + L-glutamate + ATP = gamma-L-glutamyl-L-cysteine + ADP + phosphate + H(+). It functions in the pathway sulfur metabolism; glutathione biosynthesis; glutathione from L-cysteine and L-glutamate: step 1/2. The polypeptide is Glutamate--cysteine ligase (gcs-1) (Neurospora crassa (strain ATCC 24698 / 74-OR23-1A / CBS 708.71 / DSM 1257 / FGSC 987)).